The sequence spans 209 residues: Large ribosomal subunit protein bL25 (209 aa).

Disordered regions lie at residues M1 to S20 and L190 to S209. The span at K8–S20 shows a compositional bias: basic and acidic residues. Positions V192–S209 are enriched in acidic residues.

The protein belongs to the bacterial ribosomal protein bL25 family. CTC subfamily. Part of the 50S ribosomal subunit; part of the 5S rRNA/L5/L18/L25 subcomplex. Contacts the 5S rRNA. Binds to the 5S rRNA independently of L5 and L18.

This is one of the proteins that binds to the 5S RNA in the ribosome where it forms part of the central protuberance. In Bartonella tribocorum (strain CIP 105476 / IBS 506), this protein is Large ribosomal subunit protein bL25.